The chain runs to 186 residues: Chromophore lyase CpcS/CpeS 1 (186 aa).

This sequence belongs to the CpcS/CpeS biliprotein lyase family.

Functionally, covalently attaches a chromophore to Cys residue(s) of phycobiliproteins. In Synechocystis sp. (strain ATCC 27184 / PCC 6803 / Kazusa), this protein is Chromophore lyase CpcS/CpeS 1.